Consider the following 110-residue polypeptide: Thioredoxin (110 aa).

The region spanning 3–108 (KPIEVHDSDF…YREIFDKVLA (106 aa)) is the Thioredoxin domain. Cys32 and Cys35 are oxidised to a cystine. At Lys105 the chain carries N6,N6-dimethyllysine; alternate. Position 105 is an N6-methyllysine; alternate (Lys105).

In terms of biological role, participates in various redox reactions through the reversible oxidation of its active center dithiol to a disulfide and catalyzes dithiol-disulfide exchange reactions. The polypeptide is Thioredoxin (trxA) (Chloroflexus aurantiacus (strain ATCC 29366 / DSM 635 / J-10-fl)).